The sequence spans 166 residues: MLVIHTRIAPQAAADAELELTFEARRKSRLRCFTTAGEEVGLFLERGQPALADGEFLQAKDGRIVRVRAKAEPLLHVTCASPFELMRAAYHLGNRHVALQLGDGWLRLPDDYVLKAMLEQLGATVEAVQAPYQPEQGAYGGGHHHSHHGDEEFNYGPRLHQFGVRK.

The interval 135-156 (EQGAYGGGHHHSHHGDEEFNYG) is disordered.

It belongs to the UreE family.

Its subcellular location is the cytoplasm. Involved in urease metallocenter assembly. Binds nickel. Probably functions as a nickel donor during metallocenter assembly. The polypeptide is Urease accessory protein UreE (Ectopseudomonas mendocina (strain ymp) (Pseudomonas mendocina)).